The chain runs to 75 residues: MKTGIHPEYVDTTVQCGCGHSFTTRSTKQSGTIVVEVCSQCHPFYTGKQKILDSGGRVARFEKRYGKRNKAAADK.

The Zn(2+) site is built by Cys-16, Cys-18, Cys-38, and Cys-41.

Belongs to the bacterial ribosomal protein bL31 family. Type A subfamily. In terms of assembly, part of the 50S ribosomal subunit. It depends on Zn(2+) as a cofactor.

Binds the 23S rRNA. The chain is Large ribosomal subunit protein bL31 from Mycolicibacterium smegmatis (strain ATCC 700084 / mc(2)155) (Mycobacterium smegmatis).